A 1020-amino-acid chain; its full sequence is FERM domain-containing protein 4A (1020 aa).

Residues 5-307 enclose the FERM domain; sequence RRCQVHLLDD…SQHQFYLDRK (303 aa). The interval 343–405 is necessary for interaction with CYTH1; the sequence is KGKIISGSSG…RLCLREAELT (63 aa). Positions 351-367 are enriched in low complexity; the sequence is SGSLLSSGSQESDSSQS. Residues 351–371 form a disordered region; it reads SGSLLSSGSQESDSSQSAKKD. Residues 367 to 401 adopt a coiled-coil conformation; that stretch reads SAKKDMLAALKSRQEALEETLRQRLEELKRLCLRE. Ser515 carries the phosphoserine modification. The interval 538–665 is disordered; sequence DEDSQVTSTI…MPSTPDLRVR (128 aa). The segment covering 542–551 has biased composition (polar residues); that stretch reads QVTSTISPLQ. Positions 556 to 572 are enriched in pro residues; the sequence is GLPPRPPSSHNRPPPPQ. The tract at residues 565 to 920 is necessary for tight junction and adherens junction localization; Requires for interaction with PARD3; the sequence is HNRPPPPQSL…QWYQRSTASH (356 aa). Phosphoserine is present on residues Ser590 and Ser601. Residues 609–624 show a composition bias toward basic residues; that stretch reads VKKRSSHGHSSSHKRF. The span at 626–658 shows a compositional bias: polar residues; the sequence is STGSCTEAGVSSSLQNSPIRSLPHWNSQSSMPS. Ser666 and Ser696 each carry phosphoserine. Disordered regions lie at residues 698–741 and 757–810; these read ESQG…HSSS and AEDS…QSQP. Residues 773–796 show a composition bias toward low complexity; it reads RAAGALGSASSGSMPNLAARSGAA. A phosphoserine mark is found at Ser785, Ser854, and Ser882. Disordered stretches follow at residues 862–949 and 961–1020; these read KESW…STFV and CKAT…STDE. A compositionally biased stretch (basic and acidic residues) spans 893-910; sequence DGAHDKGSGRAAVSDELR. The segment covering 927-947 has biased composition (low complexity); the sequence is SHTSSTSSDSGSQYSTSSQST. Composition is skewed to polar residues over residues 967 to 981, 994 to 1004, and 1011 to 1020; these read ALPQSQRSSTPSSEI, TWQTGEATENS, and ESPTHQSTDE.

In terms of assembly, interacts (via coiled-coil domain) with CYTH1 (via coiled-coil domain). Interacts with PARD3 (via coiled-coil domain). Found in a complex with PARD3, CYTH1 and FRMD4A. Interacts with CYTH2. Interacts with CYTH3.

The protein resides in the cytoplasm. It localises to the cytoskeleton. The protein localises to the cell junction. Its subcellular location is the adherens junction. It is found in the tight junction. In terms of biological role, scaffolding protein that regulates epithelial cell polarity by connecting ARF6 activation with the PAR3 complex. Plays a redundant role with FRMD4B in epithelial polarization. May regulate MAPT secretion by activating ARF6-signaling. The polypeptide is FERM domain-containing protein 4A (Frmd4a) (Mus musculus (Mouse)).